The following is a 478-amino-acid chain: Spindle defective protein 3 (478 aa).

At 1 to 24 (MDQMTVEEKILEHQELEDGSSSFR) the chain is on the cytoplasmic side. A helical membrane pass occupies residues 25–45 (WLVSSTVIAIGGATVALYISG). The Extracellular segment spans residues 46-52 (KIDWKIP). A helical transmembrane segment spans residues 53–73 (AIEAGLALTAGGTITCGYLWF). Topologically, residues 74 to 478 (KKRVKTVRKL…LRRVDDDIIE (405 aa)) are cytoplasmic.

It localises to the mitochondrion. It is found in the mitochondrion outer membrane. In terms of biological role, in the first mitotic division in embryos, required for mitotic spindle alignment and asymmetric cell division. Required for motor-driven chromosome movement and homolog searching within the nucleus, and subsequently ensures homologous chromosome pairing during the prophase stage of meiosis. This chain is Spindle defective protein 3, found in Caenorhabditis elegans.